The chain runs to 381 residues: tRNA pseudouridine synthase D (381 aa).

The Nucleophile role is filled by D81. The 176-residue stretch at 160-335 (GMPNYFGSQR…TLGSRRFFWV (176 aa)) folds into the TRUD domain.

It belongs to the pseudouridine synthase TruD family.

The enzyme catalyses uridine(13) in tRNA = pseudouridine(13) in tRNA. Functionally, responsible for synthesis of pseudouridine from uracil-13 in transfer RNAs. The chain is tRNA pseudouridine synthase D from Helicobacter pylori (strain P12).